A 1002-amino-acid chain; its full sequence is Copper-transporting ATPase HMA5 (1002 aa).

Low complexity predominate over residues 32–48 (RPRYPSMPRRPRSAAVA). The segment at 32–63 (RPRYPSMPRRPRSAAVAGEGGEGGGGGGDGDL) is disordered. Over residues 49–60 (GEGGEGGGGGGD) the composition is skewed to gly residues. HMA domains are found at residues 75–141 (KVAV…FEAK), 153–219 (LVCR…FEAI), and 228–294 (SRID…SGDL). Residues C86, C89, C164, and C167 each coordinate Cu(+). The next 8 membrane-spanning stretches (helical) occupy residues 320–340 (FLWS…FMYI), 354–374 (MMSI…FVIG), 392–412 (MDVL…YSIL), 425–445 (FFET…LEIL), 585–605 (VFVP…FLAG), 624–644 (LALQ…LGLA), 943–963 (YVWA…VLFP), and 972–992 (WVAG…SLLL).

The protein belongs to the cation transport ATPase (P-type) (TC 3.A.3) family. Type IB subfamily. Expressed in root pericycle cells, xylem region of diffuse vascular bundles in the first node, and vascular tissues of peduncle, rachis and husk.

The protein resides in the cell membrane. The catalysed reaction is Cu(+)(in) + ATP + H2O = Cu(+)(out) + ADP + phosphate + H(+). Functionally, copper (Cu) transporter that plays an essential role in promoting translocation of Cu from roots to shoots. Involved in loading Cu to the xylem of the roots and other organs, including panicles. This Oryza sativa subsp. japonica (Rice) protein is Copper-transporting ATPase HMA5.